Consider the following 152-residue polypeptide: FMN reductase (NADH) RutF (152 aa).

This sequence belongs to the non-flavoprotein flavin reductase family. RutF subfamily.

It catalyses the reaction FMNH2 + NAD(+) = FMN + NADH + 2 H(+). Catalyzes the reduction of FMN to FMNH2 which is used to reduce pyrimidine by RutA via the Rut pathway. The polypeptide is FMN reductase (NADH) RutF (Shigella dysenteriae serotype 1 (strain Sd197)).